We begin with the raw amino-acid sequence, 212 residues long: MSSTYFHSSLLAATLFSVTLTAPAFASENTQNTPQTITTKKPQPAENTFSEKNEESYWGKFKRNLTQTWDNDQYNYYLPVWTWHNRFTYDKEKTNRYNETPWGFGMGKYRYDNEGDWHGLYAMAFMDSNNRVQPIMGYGFEKMWYPGGDREGFRMGAGFTLSVTARHEYNYIPMPLPLPLVSVGYEHLSLQATYVPGTYNNGNVLFAWLRWQ.

The N-terminal stretch at 1 to 26 (MSSTYFHSSLLAATLFSVTLTAPAFA) is a signal peptide. A compositionally biased stretch (low complexity) spans 29 to 44 (NTQNTPQTITTKKPQP). The interval 29–50 (NTQNTPQTITTKKPQPAENTFS) is disordered. Active-site residues include H84, D127, and S128.

Belongs to the lipid A palmitoyltransferase family. Homodimer.

The protein resides in the cell outer membrane. It catalyses the reaction a lipid A + a 1,2-diacyl-sn-glycero-3-phosphocholine = a hepta-acyl lipid A + a 2-acyl-sn-glycero-3-phosphocholine. The catalysed reaction is a lipid IVA + a 1,2-diacyl-sn-glycero-3-phosphocholine = a lipid IVB + a 2-acyl-sn-glycero-3-phosphocholine. The enzyme catalyses a lipid IIA + a 1,2-diacyl-sn-glycero-3-phosphocholine = a lipid IIB + a 2-acyl-sn-glycero-3-phosphocholine. Functionally, transfers a fatty acid residue from the sn-1 position of a phospholipid to the N-linked hydroxyfatty acid chain on the proximal unit of lipid A or its precursors. The polypeptide is Lipid A acyltransferase PagP (Proteus mirabilis (strain HI4320)).